Here is a 274-residue protein sequence, read N- to C-terminus: Putative pyruvate, phosphate dikinase regulatory protein (274 aa).

151-158 contributes to the ADP binding site; it reads GVSRTSKT.

The protein belongs to the pyruvate, phosphate/water dikinase regulatory protein family. PDRP subfamily.

It catalyses the reaction N(tele)-phospho-L-histidyl/L-threonyl-[pyruvate, phosphate dikinase] + ADP = N(tele)-phospho-L-histidyl/O-phospho-L-threonyl-[pyruvate, phosphate dikinase] + AMP + H(+). The catalysed reaction is N(tele)-phospho-L-histidyl/O-phospho-L-threonyl-[pyruvate, phosphate dikinase] + phosphate + H(+) = N(tele)-phospho-L-histidyl/L-threonyl-[pyruvate, phosphate dikinase] + diphosphate. In terms of biological role, bifunctional serine/threonine kinase and phosphorylase involved in the regulation of the pyruvate, phosphate dikinase (PPDK) by catalyzing its phosphorylation/dephosphorylation. The polypeptide is Putative pyruvate, phosphate dikinase regulatory protein (Pelagibacter ubique (strain HTCC1062)).